A 192-amino-acid chain; its full sequence is 7-methyl-GTP pyrophosphatase (192 aa).

Asp69 serves as the catalytic Proton acceptor.

Belongs to the Maf family. YceF subfamily. Requires a divalent metal cation as cofactor.

It is found in the cytoplasm. It catalyses the reaction N(7)-methyl-GTP + H2O = N(7)-methyl-GMP + diphosphate + H(+). In terms of biological role, nucleoside triphosphate pyrophosphatase that hydrolyzes 7-methyl-GTP (m(7)GTP). May have a dual role in cell division arrest and in preventing the incorporation of modified nucleotides into cellular nucleic acids. This Pseudomonas fluorescens (strain Pf0-1) protein is 7-methyl-GTP pyrophosphatase.